Here is a 418-residue protein sequence, read N- to C-terminus: Exodeoxyribonuclease 7 large subunit (418 aa).

It belongs to the XseA family. In terms of assembly, heterooligomer composed of large and small subunits.

The protein localises to the cytoplasm. It catalyses the reaction Exonucleolytic cleavage in either 5'- to 3'- or 3'- to 5'-direction to yield nucleoside 5'-phosphates.. In terms of biological role, bidirectionally degrades single-stranded DNA into large acid-insoluble oligonucleotides, which are then degraded further into small acid-soluble oligonucleotides. The protein is Exodeoxyribonuclease 7 large subunit of Acaryochloris marina (strain MBIC 11017).